A 387-amino-acid chain; its full sequence is Alpha-maltose-1-phosphate synthase (387 aa).

The protein belongs to the glycosyltransferase group 1 family.

The enzyme catalyses ADP-alpha-D-glucose + alpha-D-glucose 1-phosphate = alpha-maltose 1-phosphate + ADP + H(+). The protein operates within capsule biogenesis; capsule polysaccharide biosynthesis. It functions in the pathway glycan biosynthesis; glycogen biosynthesis. Functionally, involved in the biosynthesis of the maltose-1-phosphate (M1P) building block required for alpha-glucan production by the key enzyme GlgE. Catalyzes the formation of an alpha-1,4 linkage between glucose from ADP-glucose and glucose 1-phosphate (G1P) to yield maltose-1-phosphate (M1P). This is Alpha-maltose-1-phosphate synthase from Mycobacterium tuberculosis (strain CDC 1551 / Oshkosh).